A 938-amino-acid chain; its full sequence is Isoleucine--tRNA ligase (938 aa).

A 'HIGH' region motif is present at residues 58–68 (PYANGNIHLGH). Glu-562 provides a ligand contact to L-isoleucyl-5'-AMP. The 'KMSKS' region signature appears at 603–607 (KMSKS). Lys-606 lines the ATP pocket. Cys-901, Cys-904, Cys-921, and Cys-924 together coordinate Zn(2+).

It belongs to the class-I aminoacyl-tRNA synthetase family. IleS type 1 subfamily. As to quaternary structure, monomer. Zn(2+) is required as a cofactor.

The protein localises to the cytoplasm. It catalyses the reaction tRNA(Ile) + L-isoleucine + ATP = L-isoleucyl-tRNA(Ile) + AMP + diphosphate. Catalyzes the attachment of isoleucine to tRNA(Ile). As IleRS can inadvertently accommodate and process structurally similar amino acids such as valine, to avoid such errors it has two additional distinct tRNA(Ile)-dependent editing activities. One activity is designated as 'pretransfer' editing and involves the hydrolysis of activated Val-AMP. The other activity is designated 'posttransfer' editing and involves deacylation of mischarged Val-tRNA(Ile). The polypeptide is Isoleucine--tRNA ligase (Glaesserella parasuis serovar 5 (strain SH0165) (Haemophilus parasuis)).